The sequence spans 120 residues: Small ribosomal subunit protein bS6 (120 aa).

It belongs to the bacterial ribosomal protein bS6 family.

Its function is as follows. Binds together with bS18 to 16S ribosomal RNA. This is Small ribosomal subunit protein bS6 from Blochmanniella floridana.